We begin with the raw amino-acid sequence, 174 residues long: Magnetosome protein MamT (174 aa).

Residues 1-9 (MGTPGGGRR) are Cytoplasmic-facing. Residues 10-28 (WMTLISITLLMVVGLGLYW) traverse the membrane as a helical segment. The Lumenal portion of the chain corresponds to 29-174 (DELSLSAGIS…EKKSGIKWLL (146 aa)). The MCR (magnetochrome) 1 motif lies at 87–107 (VMPGTGMPHPYVGDCIQCHLM). Residues Cys101, Cys104, His105, Cys152, Cys155, and His156 each coordinate heme. Residues 138–158 (ILPTTRQPHPPAGRCIKCHDI) carry the MCR 2 motif.

Belongs to the magnetosome MamT family. It depends on heme as a cofactor.

Its subcellular location is the magnetosome membrane. Its function is as follows. May play a role in magnetite crystal maturation. May transfer electrons to balance the Fe(2+)-Fe(3+) ratio during magnetite formation. The protein is Magnetosome protein MamT of Magnetospirillum gryphiswaldense (strain DSM 6361 / JCM 21280 / NBRC 15271 / MSR-1).